The chain runs to 240 residues: REF/SRPP-like protein At1g67360 (240 aa).

Positions 208 to 240 are disordered; sequence KEDARRKKGGDTAGKKGETTDAADGDKSSSDSE.

Belongs to the REF/SRPP family.

This is REF/SRPP-like protein At1g67360 from Arabidopsis thaliana (Mouse-ear cress).